The chain runs to 38 residues: Photosystem II reaction center protein L (38 aa).

The helical transmembrane segment at 17–37 (SLYWGLLLIFVLAVLFSSYIF) threads the bilayer.

The protein belongs to the PsbL family. In terms of assembly, PSII is composed of 1 copy each of membrane proteins PsbA, PsbB, PsbC, PsbD, PsbE, PsbF, PsbH, PsbI, PsbJ, PsbK, PsbL, PsbM, PsbT, PsbX, PsbY, PsbZ, Psb30/Ycf12, at least 3 peripheral proteins of the oxygen-evolving complex and a large number of cofactors. It forms dimeric complexes.

It is found in the plastid. Its subcellular location is the chloroplast thylakoid membrane. In terms of biological role, one of the components of the core complex of photosystem II (PSII). PSII is a light-driven water:plastoquinone oxidoreductase that uses light energy to abstract electrons from H(2)O, generating O(2) and a proton gradient subsequently used for ATP formation. It consists of a core antenna complex that captures photons, and an electron transfer chain that converts photonic excitation into a charge separation. This subunit is found at the monomer-monomer interface and is required for correct PSII assembly and/or dimerization. The chain is Photosystem II reaction center protein L from Ostreococcus tauri.